The chain runs to 203 residues: Outer-membrane lipoprotein carrier protein (203 aa).

Residues 1–21 (MKKIAITCALLSSLVASSVWA) form the signal peptide.

It belongs to the LolA family. In terms of assembly, monomer.

It localises to the periplasm. In terms of biological role, participates in the translocation of lipoproteins from the inner membrane to the outer membrane. Only forms a complex with a lipoprotein if the residue after the N-terminal Cys is not an aspartate (The Asp acts as a targeting signal to indicate that the lipoprotein should stay in the inner membrane). In Escherichia coli O139:H28 (strain E24377A / ETEC), this protein is Outer-membrane lipoprotein carrier protein.